The chain runs to 685 residues: Protein arginine N-methyltransferase 7 (685 aa).

SAM-dependent MTase PRMT-type domains are found at residues 14 to 355 (QATW…YSLW) and 364 to 685 (AESI…LKSI).

Belongs to the class I-like SAM-binding methyltransferase superfamily. Protein arginine N-methyltransferase family. PRMT7 subfamily.

In terms of biological role, essential arginine methyltransferase that can both catalyze the formation of omega-N monomethylarginine (MMA) and symmetrical dimethylarginine (sDMA). Specifically mediates the symmetrical dimethylation of arginine residues in the small nuclear ribonucleoproteins SmD1 and SmD3. The polypeptide is Protein arginine N-methyltransferase 7 (Art7) (Drosophila willistoni (Fruit fly)).